Reading from the N-terminus, the 1849-residue chain is UPF0606 protein KIAA1549L (1849 aa).

Residues 1-10 (MDHTASQNAQ) show a composition bias toward polar residues. 4 disordered regions span residues 1-70 (MDHT…LLQL), 142-166 (ATAN…PALS), 213-242 (PTEN…PATR), and 529-586 (RHSV…ERNA). 2 stretches are compositionally biased toward polar residues: residues 529 to 541 (RHSV…QLPN) and 552 to 586 (PGPT…ERNA). A coiled-coil region spans residues 958–986 (KFAQTMEQRLQKAFQDAERKVLNTKSNLT). The helical transmembrane segment at 1180 to 1200 (LWIIAAVLAPIAVVTVIIIII) threads the bilayer. 4 disordered regions span residues 1258 to 1338 (LPIR…EEEG), 1460 to 1546 (SKNR…SQPS), 1656 to 1679 (RSTS…AQLH), and 1769 to 1819 (SRYP…APLT). Polar residues-rich tracts occupy residues 1290–1319 (PSEN…AQQK), 1463–1482 (RQQM…SPSP), and 1537–1546 (ETSTLSSQPS). 2 stretches are compositionally biased toward low complexity: residues 1769-1786 (SRYP…YSQP) and 1795-1809 (QAPA…QSLA).

This sequence belongs to the UPF0606 family.

It is found in the membrane. The chain is UPF0606 protein KIAA1549L (KIAA1549L) from Homo sapiens (Human).